We begin with the raw amino-acid sequence, 544 residues long: MNNEIVKKWLSSDNVPQTDKDIISKMKNEELELAFSNAPLSFGTAGIRAKMAPGTQFLNKITYYQMATGYGKFLKNKFSNQNISVIVAHDNRNNGIDFSIDVTNILTSLELEFICLKIINLLLRQLFSYAIRKLNAQGAVIVTASHNPKEDNGFKIYNETGAQVLPDDGLKVVELMPNVFEMIDLKVANDDSLITYLNEDIFRQYYEDCKQALIKTNINESKEFSIVFSGQHGTACKRLPEFLKLLGYKNIILVEEQCIFDGNFSNTPTPNPENRAAWDLSIEYADKNNANVIIQVDPDADRFALGVRYKNSWRFLSGNQMGIIYTDYILKNKTFTKKPYIVSSYVSTNLIDRIIKEYHGEVYRVGTGFKWVGDKINKIKDSEEFVVGFEEAVGALNSTINRDKDAYQAAALALEIYNECLKNNINIIDHLEKNIYGKYGIIHNDTISFTFVENNWKELVKKSLDKILKYSEKTIGNRTITSIKYNEVGGCYDWILDGDSWLRFRMSGTEPKFKVYYNLYGENLNALSQEAKTINDQIKTLLNL.

Catalysis depends on serine 145, which acts as the Phosphoserine intermediate. Residues serine 145, aspartate 297, aspartate 299, and aspartate 301 each contribute to the Mg(2+) site.

The protein belongs to the phosphohexose mutase family. Mg(2+) is required as a cofactor.

It catalyses the reaction alpha-D-mannose 1-phosphate = D-mannose 6-phosphate. In Mycoplasmoides pirum (Mycoplasma pirum), this protein is Phosphomannomutase (manB).